A 208-amino-acid chain; its full sequence is FMN-dependent NADH:quinone oxidoreductase (208 aa).

FMN is bound by residues Ser-9 and 15–17; that span reads SHS.

This sequence belongs to the azoreductase type 1 family. As to quaternary structure, homodimer. FMN serves as cofactor.

The enzyme catalyses 2 a quinone + NADH + H(+) = 2 a 1,4-benzosemiquinone + NAD(+). It carries out the reaction N,N-dimethyl-1,4-phenylenediamine + anthranilate + 2 NAD(+) = 2-(4-dimethylaminophenyl)diazenylbenzoate + 2 NADH + 2 H(+). Its function is as follows. Quinone reductase that provides resistance to thiol-specific stress caused by electrophilic quinones. Functionally, also exhibits azoreductase activity. Catalyzes the reductive cleavage of the azo bond in aromatic azo compounds to the corresponding amines. The polypeptide is FMN-dependent NADH:quinone oxidoreductase (Bordetella petrii (strain ATCC BAA-461 / DSM 12804 / CCUG 43448)).